Consider the following 287-residue polypeptide: U-megalopygitoxin(8)-Mc8 (287 aa).

An N-terminal signal peptide occupies residues 1–17; that stretch reads MYLQYLVLSLFSTTVYG.

Belongs to the caterpillar 8 family. Post-translationally, contains 2 disulfide bonds. In terms of tissue distribution, expressed by the venom apparatus.

The protein resides in the secreted. Probable toxin. The chain is U-megalopygitoxin(8)-Mc8 from Megalopyge crispata (Black-waved flannel moth).